The following is a 264-amino-acid chain: MDDKLVIAGREYGSRLLVGTGKYKDFEQTAAALDVSGTEIVTAAIRRVNLGQNANEPNLLDFLPKNRYNLLPNTAGCYSAEDAIRTLRLARELLDDHRFVKLEVLGDPNNLYPNVRETLKAAEVLVAEGFDVLVYTSDDPIVARELEQIGCCAIMPLASLIGSGMGILNPWNLQLIIEQSKVPVIVDAGVGTASDAAIAMELGCDGVLMNTAIAAARDPVRMAHAMKLAVEAGRAAYLAGRMPKRFYSAVPSSPSEGVISSVKS.

The Schiff-base intermediate with DXP role is filled by lysine 101. 1-deoxy-D-xylulose 5-phosphate is bound by residues glycine 162, 188 to 189 (AG), and 210 to 211 (NT).

It belongs to the ThiG family. Homotetramer. Forms heterodimers with either ThiH or ThiS.

The protein resides in the cytoplasm. The enzyme catalyses [ThiS sulfur-carrier protein]-C-terminal-Gly-aminoethanethioate + 2-iminoacetate + 1-deoxy-D-xylulose 5-phosphate = [ThiS sulfur-carrier protein]-C-terminal Gly-Gly + 2-[(2R,5Z)-2-carboxy-4-methylthiazol-5(2H)-ylidene]ethyl phosphate + 2 H2O + H(+). Its pathway is cofactor biosynthesis; thiamine diphosphate biosynthesis. In terms of biological role, catalyzes the rearrangement of 1-deoxy-D-xylulose 5-phosphate (DXP) to produce the thiazole phosphate moiety of thiamine. Sulfur is provided by the thiocarboxylate moiety of the carrier protein ThiS. In vitro, sulfur can be provided by H(2)S. In Chromobacterium violaceum (strain ATCC 12472 / DSM 30191 / JCM 1249 / CCUG 213 / NBRC 12614 / NCIMB 9131 / NCTC 9757 / MK), this protein is Thiazole synthase.